A 239-amino-acid chain; its full sequence is Large ribosomal subunit protein uL2 (239 aa).

The tract at residues 205 to 224 (GGHQHCGRPKTVARGTSPGR) is disordered.

This sequence belongs to the universal ribosomal protein uL2 family. Part of the 50S ribosomal subunit. Forms a bridge to the 30S subunit in the 70S ribosome.

In terms of biological role, one of the primary rRNA binding proteins. Required for association of the 30S and 50S subunits to form the 70S ribosome, for tRNA binding and peptide bond formation. It has been suggested to have peptidyltransferase activity; this is somewhat controversial. Makes several contacts with the 16S rRNA in the 70S ribosome. This chain is Large ribosomal subunit protein uL2, found in Methanoculleus marisnigri (strain ATCC 35101 / DSM 1498 / JR1).